The primary structure comprises 129 residues: Glycine cleavage system H protein (129 aa).

The region spanning L24–R106 is the Lipoyl-binding domain. At K65 the chain carries N6-lipoyllysine.

This sequence belongs to the GcvH family. In terms of assembly, the glycine cleavage system is composed of four proteins: P, T, L and H. Requires (R)-lipoate as cofactor.

Its function is as follows. The glycine cleavage system catalyzes the degradation of glycine. The H protein shuttles the methylamine group of glycine from the P protein to the T protein. The polypeptide is Glycine cleavage system H protein (Synechococcus sp. (strain CC9311)).